The sequence spans 489 residues: MAEGKAGGAAGLFAKQMQKKFSRAQEKVLQKLGKTVETKDERFEQSASNFYQQQAEGHKLYKDLKNFLSAVKVMHESSKRVSETLQEVYSSDWDGHEDLKAIVGNNDLLWEDYEEKLADQALRTMENYVSQFSEIKERIAKRGRKLVDYDSARHHLEAVQNAKKKDDAKMAKAEEDFSKAQIVFEDLNQELLEELPILYNSRIGCYVTVFQNISNLRDVFYREMSKLNHNLYEVMSKLEKQHSNKVFVVKGLSSSSRRSLVISPPVQSCAASSPVSPVSPVSPVTSPTSPSATSEPESVSATGEELTSEAGGEDSCESQESLKDEEADEAQSETSSSLPACNGPTPAPASPAAEVGSQEEALSSSAQSPGRGQTGKDTPSPGDVVLRARASSEGAEQSKRAASIQRTSAPPSRPPPPRASGSGSCNAPGSPEGSSQLCSPRASPDASSNPEPAETREKEGAGSSGPEEPRAVSTKSATQASGGLVGLFL.

One can recognise a BAR domain in the interval 28–244; the sequence is VLQKLGKTVE…MSKLEKQHSN (217 aa). Positions 267–302 are enriched in low complexity; it reads QSCAASSPVSPVSPVSPVTSPTSPSATSEPESVSAT. The disordered stretch occupies residues 267–489; the sequence is QSCAASSPVS…ASGGLVGLFL (223 aa). Phosphoserine is present on Ser273. Acidic residues predominate over residues 311-331; sequence GGEDSCESQESLKDEEADEAQ. Ser357 carries the phosphoserine modification. A compositionally biased stretch (low complexity) spans 358–368; the sequence is QEEALSSSAQS. A phosphoserine mark is found at Ser380, Ser392, Ser420, Ser422, Ser424, Ser430, Ser435, Ser439, and Ser443.

Homodimer. Interacts with BIN1. Interacts with ARHGEF6 (via SH3 domain), ARHGEF7 (via SH3 domain), SH3GL1, SH3GL2 and SH3GL3. Identified in a complex with ARHGEF6 and GIT2.

The protein resides in the cytoplasm. It is found in the cell projection. It localises to the podosome membrane. Its subcellular location is the cell cortex. The protein localises to the phagocytic cup. Its function is as follows. Promotes cell motility and migration, probably via its interaction with the cell membrane and with podosome proteins that mediate interaction with the cytoskeleton. Modulates membrane curvature and mediates membrane tubulation. Inhibits phagocytosis. Plays a role in podosome formation. The protein is Bridging integrator 2 (Bin2) of Mus musculus (Mouse).